The sequence spans 343 residues: GTPase Obg (343 aa).

Positions 1-159 (MKYIDEVKIQ…FELKLELRVL (159 aa)) constitute an Obg domain. The 175-residue stretch at 160-334 (ADVGLLGLPN…LTYAIMGYLE (175 aa)) folds into the OBG-type G domain. GTP-binding positions include 166-173 (GLPNAGKS), 191-195 (FTTLY), 213-216 (DIPG), 284-287 (NKVD), and 315-317 (SAL). Residues S173 and T193 each coordinate Mg(2+).

The protein belongs to the TRAFAC class OBG-HflX-like GTPase superfamily. OBG GTPase family. Monomer. Requires Mg(2+) as cofactor.

It is found in the cytoplasm. Functionally, an essential GTPase which binds GTP, GDP and possibly (p)ppGpp with moderate affinity, with high nucleotide exchange rates and a fairly low GTP hydrolysis rate. Plays a role in control of the cell cycle, stress response, ribosome biogenesis and in those bacteria that undergo differentiation, in morphogenesis control. This is GTPase Obg from Nitrosomonas eutropha (strain DSM 101675 / C91 / Nm57).